The following is a 62-amino-acid chain: Photosystem II reaction center protein Z (62 aa).

2 helical membrane passes run 8–28 and 41–61; these read AVFA…VVFS and FSGT…NSLI.

It belongs to the PsbZ family. In terms of assembly, PSII is composed of 1 copy each of membrane proteins PsbA, PsbB, PsbC, PsbD, PsbE, PsbF, PsbH, PsbI, PsbJ, PsbK, PsbL, PsbM, PsbT, PsbY, PsbZ, Psb30/Ycf12, at least 3 peripheral proteins of the oxygen-evolving complex and a large number of cofactors. It forms dimeric complexes.

The protein resides in the plastid. Its subcellular location is the chloroplast thylakoid membrane. In terms of biological role, may control the interaction of photosystem II (PSII) cores with the light-harvesting antenna, regulates electron flow through the 2 photosystem reaction centers. PSII is a light-driven water plastoquinone oxidoreductase, using light energy to abstract electrons from H(2)O, generating a proton gradient subsequently used for ATP formation. In Populus alba (White poplar), this protein is Photosystem II reaction center protein Z.